Reading from the N-terminus, the 88-residue chain is Small ribosomal subunit protein uS15 (88 aa).

Belongs to the universal ribosomal protein uS15 family. As to quaternary structure, part of the 30S ribosomal subunit. Forms a bridge to the 50S subunit in the 70S ribosome, contacting the 23S rRNA.

One of the primary rRNA binding proteins, it binds directly to 16S rRNA where it helps nucleate assembly of the platform of the 30S subunit by binding and bridging several RNA helices of the 16S rRNA. Functionally, forms an intersubunit bridge (bridge B4) with the 23S rRNA of the 50S subunit in the ribosome. This Geobacter metallireducens (strain ATCC 53774 / DSM 7210 / GS-15) protein is Small ribosomal subunit protein uS15.